Here is a 264-residue protein sequence, read N- to C-terminus: GTP cyclohydrolase FolE2 (264 aa).

The protein belongs to the GTP cyclohydrolase IV family.

The enzyme catalyses GTP + H2O = 7,8-dihydroneopterin 3'-triphosphate + formate + H(+). It functions in the pathway cofactor biosynthesis; 7,8-dihydroneopterin triphosphate biosynthesis; 7,8-dihydroneopterin triphosphate from GTP: step 1/1. Its function is as follows. Converts GTP to 7,8-dihydroneopterin triphosphate. The chain is GTP cyclohydrolase FolE2 from Akkermansia muciniphila (strain ATCC BAA-835 / DSM 22959 / JCM 33894 / BCRC 81048 / CCUG 64013 / CIP 107961 / Muc).